The following is a 1759-amino-acid chain: Histone-lysine N-methyltransferase ASHH2 (1759 aa).

3 stretches are compositionally biased toward basic and acidic residues: residues 154-165 (QEKEAPQAKEDE), 197-206 (ETTKHIKPDE), and 215-224 (RFDDGGKEGR). Disordered stretches follow at residues 154 to 181 (QEKEAPQAKEDEGYGGTTLPIGGSGIDT), 197 to 237 (ETTK…GSSD), 437 to 482 (CEAG…IESI), 515 to 556 (SNNI…NRNI), and 738 to 816 (DELR…VGRI). The span at 462–472 (SARHLRKSSRK) shows a compositional bias: basic residues. A compositionally biased stretch (polar residues) spans 530–556 (RSQGNLNNGEHNRSSHNGNVEGSNRNI). Positions 758–775 (KKAKHPKSKSNGTKKGKS) are enriched in basic residues. Composition is skewed to basic and acidic residues over residues 776-797 (KFSESAKDGRKNESHEGVEQRK) and 804-816 (GRDDSDYPEVGRI). The CW-type zinc finger occupies 859–912 (YSTESAWVRCDDCFKWRRIPASVVGSIDESSRWICMNNSDKRFADCSKSQEMSN). Residues Cys-868, Cys-871, Cys-893, and Cys-904 each coordinate Zn(2+). Positions 974–1024 (DEIMVCHCKPSPDGRLGCGEECLNRMLNIECLQGTCPAGDLCSNQQFQKRK) constitute an AWS domain. The region spanning 1026-1143 (VKFERFQSGK…KGQELTFDYN (118 aa)) is the SET domain. An S-adenosyl-L-methionine-binding site is contributed by Tyr-1142. One can recognise a Post-SET domain in the interval 1151 to 1167 (AAKKCYCGSSHCRGYIG). Disordered stretches follow at residues 1225–1253 (GYKDLAPDNTQTQSSVSVKLPEREIPPPL), 1271–1345 (AVQQ…PGVN), 1496–1606 (ERSE…FSSP), and 1727–1759 (KQSVPPWLRNNGGEKTANSPIPGNLTLEKKLNS). Polar residues predominate over residues 1232–1241 (DNTQTQSSVS). Over residues 1284-1293 (STSPTSSSLS) the composition is skewed to low complexity. A compositionally biased stretch (basic and acidic residues) spans 1304–1316 (KTTKHGSGEDKKI). Residues 1317–1326 (LPRPRPRMKT) are compositionally biased toward basic residues. Residues 1511 to 1521 (ASQEPRYDHQS) show a composition bias toward basic and acidic residues. Over residues 1530–1556 (SVTSSKAATPETASVSEGYSEPNSGLP) the composition is skewed to polar residues. Over residues 1566–1577 (RWDQPSKTKEQR) the composition is skewed to basic and acidic residues. Over residues 1581–1594 (ILSQQTDETNGNQD) the composition is skewed to polar residues.

It belongs to the class V-like SAM-binding methyltransferase superfamily. Histone-lysine methyltransferase family. SET2 subfamily. As to quaternary structure, interacts with FRI and SUF4, two components of the transcription activator complex FRI-C, and with SWC6, a component of the SWR1 chromatin-remodeling complex. Interacts with BZR2/BES1 and IWS1. In terms of tissue distribution, ubiquitous, with higher levels in young tissues, including shoot and root apex. Expressed in ovules, tapetum layer and microspores.

The protein localises to the nucleus. Its subcellular location is the chromosome. It localises to the centromere. The enzyme catalyses N(6)-methyl-L-lysyl(36)-[histone H3] + S-adenosyl-L-methionine = N(6),N(6)-dimethyl-L-lysyl(36)-[histone H3] + S-adenosyl-L-homocysteine + H(+). The catalysed reaction is N(6),N(6)-dimethyl-L-lysyl(36)-[histone H3] + S-adenosyl-L-methionine = N(6),N(6),N(6)-trimethyl-L-lysyl(36)-[histone H3] + S-adenosyl-L-homocysteine + H(+). In terms of biological role, histone methyltransferase involved in di and tri-methylation of 'Lys-36' of histone H3 (H3K36me2 and H3K36me3). Binds to H3 already mono- or di-methylated on 'Lys-4'(H3K4me1 or H3K4me2), but not to H3K4me3. H3K4me and H3K36me represent specific tags for epigenetic transcriptional activation. Positively regulates FLC transcription to prevent early flowering transition. Required for flowering transition in response to vernalization and for the maintenance of FLC expression in late embryos, but dispensable for the initial reactivation in early embryos during reprogramming. Also seems to modulate several traits including floral organ size, root size and dormancy. Promotes apical dominance. Directly involved in the tri-methylation of 'Lys-36' of histone H3 (H3K36me3) at LAZ5 chromatin to maintain a transcriptionally active state of LAZ5, a TIR-NB-LRR protein involved in innate immunity. Required for brassinosteroid (BR)-induced gene expression and histone H3 trimethylation on 'Lys-36' (H3K36me3) in BR-regulated genes. The chain is Histone-lysine N-methyltransferase ASHH2 from Arabidopsis thaliana (Mouse-ear cress).